Reading from the N-terminus, the 238-residue chain is Probable transcriptional regulatory protein CAB166 (238 aa).

Belongs to the TACO1 family.

It is found in the cytoplasm. In Chlamydia abortus (strain DSM 27085 / S26/3) (Chlamydophila abortus), this protein is Probable transcriptional regulatory protein CAB166.